A 585-amino-acid polypeptide reads, in one-letter code: A-type ATP synthase subunit A (585 aa).

231 to 238 (GPFGSGKT) is an ATP binding site.

This sequence belongs to the ATPase alpha/beta chains family. Has multiple subunits with at least A(3), B(3), C, D, E, F, H, I and proteolipid K(x).

It localises to the cell membrane. The enzyme catalyses ATP + H2O + 4 H(+)(in) = ADP + phosphate + 5 H(+)(out). In terms of biological role, component of the A-type ATP synthase that produces ATP from ADP in the presence of a proton gradient across the membrane. The A chain is the catalytic subunit. The polypeptide is A-type ATP synthase subunit A (Thermococcus gammatolerans (strain DSM 15229 / JCM 11827 / EJ3)).